The primary structure comprises 96 residues: Antigen H4 (96 aa).

Residues Glu1 to Glu20 form a disordered region. The N-linked (GlcNAc...) asparagine glycan is linked to Asn34.

The protein is Antigen H4 (H4) of Toxoplasma gondii.